The chain runs to 101 residues: Putative pterin-4-alpha-carbinolamine dehydratase (101 aa).

Belongs to the pterin-4-alpha-carbinolamine dehydratase family.

The enzyme catalyses (4aS,6R)-4a-hydroxy-L-erythro-5,6,7,8-tetrahydrobiopterin = (6R)-L-erythro-6,7-dihydrobiopterin + H2O. This is Putative pterin-4-alpha-carbinolamine dehydratase from Burkholderia mallei (strain ATCC 23344).